We begin with the raw amino-acid sequence, 491 residues long: Nuatigenin 3-beta-glucosyltransferase (491 aa).

The active-site Proton acceptor is His20. His20 contributes to the an anthocyanidin binding site. Asp125 functions as the Charge relay in the catalytic mechanism. Residues Ala352, Gln354, His369, Trp372, Asn373, Ser374, and Glu377 each coordinate UDP-alpha-D-glucose. An anthocyanidin is bound at residue Ala392. 2 residues coordinate UDP-alpha-D-glucose: Glu393 and Gln394.

It belongs to the UDP-glycosyltransferase family. As to expression, expressed in roots, stems and leaves.

The catalysed reaction is nuatigenin + UDP-alpha-D-glucose = nuatigenin 3-beta-D-glucopyranoside + UDP + H(+). It carries out the reaction diosgenin + UDP-alpha-D-glucose = diosgenin 3-O-beta-D-glucoside + UDP + H(+). It catalyses the reaction tigogenin + UDP-alpha-D-glucose = tigogenin 3-O-beta-D-glucopyranoside + UDP + H(+). The enzyme catalyses solasodine + UDP-alpha-D-glucose = solasodine 3-beta-D-glucoside + UDP + H(+). The catalysed reaction is solanidine + UDP-alpha-D-glucose = solanidine 3-O-beta-D-glucopyranoside + UDP + H(+). It carries out the reaction tomatidine + UDP-alpha-D-glucose = tomatidine 3-O-beta-D-glucopyranoside + UDP + H(+). In terms of biological role, glucosyltransferase involved in steroid saponin biosynthesis. Catalyzes the 3-O-glucosylation of steroidal sapogenins, such as diosgenin, nuatigenin and tigogenin. Can glucosylate steroidal alkaloids, such as solanidine, solasodine and tomatidine. The chain is Nuatigenin 3-beta-glucosyltransferase from Solanum aculeatissimum (Dutch eggplant).